The following is a 213-amino-acid chain: Glycerol-3-phosphate acyltransferase (213 aa).

6 helical membrane-spanning segments follow: residues 2-22 (ITIV…GLWI), 52-74 (AGMA…PIIF), 81-100 (PLIF…FAGF), 112-132 (VIFG…FGAL), 143-163 (VTAS…GFIL), and 164-184 (SNYD…IIIR).

The protein belongs to the PlsY family. As to quaternary structure, probably interacts with PlsX.

The protein localises to the cell membrane. The enzyme catalyses an acyl phosphate + sn-glycerol 3-phosphate = a 1-acyl-sn-glycero-3-phosphate + phosphate. The protein operates within lipid metabolism; phospholipid metabolism. Functionally, catalyzes the transfer of an acyl group from acyl-phosphate (acyl-PO(4)) to glycerol-3-phosphate (G3P) to form lysophosphatidic acid (LPA). This enzyme utilizes acyl-phosphate as fatty acyl donor, but not acyl-CoA or acyl-ACP. This Streptococcus pneumoniae (strain ATCC 700669 / Spain 23F-1) protein is Glycerol-3-phosphate acyltransferase.